The primary structure comprises 597 residues: Centrosomal protein of 70 kDa (597 aa).

The interval 1–23 is disordered; the sequence is MFPVAPKPQDSSQASDRLMTEKQ. Coiled-coil stretches lie at residues 66–179 and 254–326; these read MRQN…QMEV and TYKG…KKAE. One copy of the TPR repeat lies at 483–516; that stretch reads NGVYPRMNEVYTRLGEMNNAVRNLQELLELDSSS.

Directly interacts with tubulin-gamma; this interaction determines centrosomal localization.

The protein resides in the cytoplasm. It localises to the cytoskeleton. It is found in the microtubule organizing center. Its subcellular location is the centrosome. Functionally, plays a role in the organization of both preexisting and nascent microtubules in interphase cells. During mitosis, required for the organization and orientation of the mitotic spindle. The sequence is that of Centrosomal protein of 70 kDa (CEP70) from Pongo abelii (Sumatran orangutan).